The chain runs to 224 residues: MSRRIIVGTLQRTQRNMNSGISQVFQRELTCPICMNYFIDPVTIDCGHSFCRPCFYLNWQDIPILTQCFECIKTIQQRNLKTNIRLKKMASLARKASLWLFLSSEEQMCGIHRETKKMFCEVDRSLLCLLCSSSQEHRYHRHCPAEWAAEEHWEKLLKKMQSLWEKACENQRNLNVETTRISHWKAFGDILYRSESVLLHMPQPLNLALRAGPITGLRDRLNQF.

The RING-type zinc-finger motif lies at 31–72; it reads CPICMNYFIDPVTIDCGHSFCRPCFYLNWQDIPILTQCFECI. The B box-type zinc finger occupies 104-145; the sequence is SEEQMCGIHRETKKMFCEVDRSLLCLLCSSSQEHRYHRHCPA. Positions 109, 112, 131, and 137 each coordinate Zn(2+).

It belongs to the TRIM/RBCC family. Interacts with PRMT1; the interaction leads to ubiquitination of PRMT1 by TRIM48. Interacts with MAP3K5. Interacts with STRAP.

Its subcellular location is the cytoplasm. It localises to the cytosol. The catalysed reaction is S-ubiquitinyl-[E2 ubiquitin-conjugating enzyme]-L-cysteine + [acceptor protein]-L-lysine = [E2 ubiquitin-conjugating enzyme]-L-cysteine + N(6)-ubiquitinyl-[acceptor protein]-L-lysine.. E3 ubiquitin-protein ligase which promotes K48-linked polyubiquitination of protein methyltransferase PRMT1, leading to PRMT1 degradation. This suppresses methylation of the PRMT1 substrate MAP3K5/ASK1, promoting its activation and increasing MAP3K5-dependent cell death induced by oxidative stress. TRIM48-mediated ubiquitination of PRMT1 also suppresses methylation of FOXO1 by PRMT1, leading to inhibition of FOXO1 transcriptional activity. In Homo sapiens (Human), this protein is E3 ubiquitin-protein ligase TRIM48.